The sequence spans 78 residues: Large ribosomal subunit protein bL28 (78 aa).

Belongs to the bacterial ribosomal protein bL28 family.

In Shigella boydii serotype 4 (strain Sb227), this protein is Large ribosomal subunit protein bL28.